The chain runs to 491 residues: Peptidyl-prolyl isomerase CWC27 (491 aa).

The PPIase cyclophilin-type domain maps to 11–167; sequence TNGKVIIDTT…IPPKIRRIHI (157 aa). Composition is skewed to basic and acidic residues over residues 186-202, 268-298, and 306-316; these read AQQKAKLEAKKDMEQRE, DLGKSRENEASEEKKAVDLKNIRAQHEREKA, and AEIKRMEEDLR. Disordered regions lie at residues 186–427 and 464–491; these read AQQK…IEVD and RDLLGKPDKKKLKGNPNRRTVRNSGRNR. A coiled-coil region spans residues 277 to 327; the sequence is ASEEKKAVDLKNIRAQHEREKAGGSAARQAEIKRMEEDLRRLKKRSGSVSD. The segment covering 323-333 has biased composition (low complexity); that stretch reads GSVSDSESDSS. Over residues 352–367 the composition is skewed to basic residues; that stretch reads ASKRGRAAMKAGNKRG. Acidic residues-rich tracts occupy residues 391 to 406 and 418 to 427; these read DEPEEEQAEEIEEGEA and AEEEGGIEVD. The span at 482 to 491 shows a compositional bias: basic residues; sequence RTVRNSGRNR.

It belongs to the cyclophilin-type PPIase family. CWC27 subfamily. As to quaternary structure, associated with the spliceosome.

It is found in the cytoplasm. The protein resides in the nucleus. The catalysed reaction is [protein]-peptidylproline (omega=180) = [protein]-peptidylproline (omega=0). Functionally, PPIases accelerate the folding of proteins. It catalyzes the cis-trans isomerization of proline imidic peptide bonds in oligopeptides. Involved in pre-mRNA splicing. This chain is Peptidyl-prolyl isomerase CWC27 (CWC27), found in Cryptococcus neoformans var. neoformans serotype D (strain B-3501A) (Filobasidiella neoformans).